Reading from the N-terminus, the 398-residue chain is Succinate--CoA ligase [ADP-forming] subunit beta (398 aa).

The 246-residue stretch at 9–254 (KAVLREFGVP…ESEEDAKEIE (246 aa)) folds into the ATP-grasp domain. ATP-binding positions include Lys-46, 53 to 55 (GRG), Glu-109, Ser-112, and Glu-117. Mg(2+)-binding residues include Asn-209 and Asp-223. Substrate contacts are provided by residues Asn-274 and 331 to 333 (GIM).

The protein belongs to the succinate/malate CoA ligase beta subunit family. As to quaternary structure, heterotetramer of two alpha and two beta subunits. The cofactor is Mg(2+).

It carries out the reaction succinate + ATP + CoA = succinyl-CoA + ADP + phosphate. The enzyme catalyses GTP + succinate + CoA = succinyl-CoA + GDP + phosphate. It participates in carbohydrate metabolism; tricarboxylic acid cycle; succinate from succinyl-CoA (ligase route): step 1/1. Functionally, succinyl-CoA synthetase functions in the citric acid cycle (TCA), coupling the hydrolysis of succinyl-CoA to the synthesis of either ATP or GTP and thus represents the only step of substrate-level phosphorylation in the TCA. The beta subunit provides nucleotide specificity of the enzyme and binds the substrate succinate, while the binding sites for coenzyme A and phosphate are found in the alpha subunit. The polypeptide is Succinate--CoA ligase [ADP-forming] subunit beta (Rhodopseudomonas palustris (strain HaA2)).